The sequence spans 415 residues: Krueppel-like factor 15 (415 aa).

Positions 75-83 match the 9aaTAD motif; that stretch reads SILDFLLSR. Residues 172–216 are disordered; sequence LSAGSHRSHLHPESAGRERCTPPPGGTSGGGAQSAGEGPAHDGPV. Over residues 181–191 the composition is skewed to basic and acidic residues; sequence LHPESAGRERC. C2H2-type zinc fingers lie at residues 320–344, 350–374, and 380–402; these read HKCT…LRRH, FACT…RRSH, and YQCP…IKVH.

It belongs to the Sp1 C2H2-type zinc-finger protein family. As to quaternary structure, interacts with MYOCD. Interacts with EP300. Expressed in aortic smooth muscle cells.

It is found in the nucleus. In terms of biological role, transcriptional regulator that binds to the GA element of the CLCNKA promoter. Binds to the KCNIP2 promoter and regulates KCNIP2 circadian expression in the heart. Is a repressor of CCN2 expression, involved in the control of cardiac fibrosis. Is also involved in the control of cardiac hypertrophy acting through the inhibition of MEF2A, GATA4 and MYOCD activity. Is a negative regulator of TP53 acetylation. Inhibits NF-kappa-B activation through repression of EP300-dependent RELA acetylation. Involved in podocyte differentiation. The sequence is that of Krueppel-like factor 15 (Klf15) from Mus musculus (Mouse).